The chain runs to 396 residues: Deoxyguanosinetriphosphate triphosphohydrolase-like protein (396 aa).

The region spanning Arg69–Asn211 is the HD domain.

It belongs to the dGTPase family. Type 2 subfamily.

This Parvibaculum lavamentivorans (strain DS-1 / DSM 13023 / NCIMB 13966) protein is Deoxyguanosinetriphosphate triphosphohydrolase-like protein.